The sequence spans 84 residues: Kunitz-type serine protease inhibitor DrKIn-II (84 aa).

A signal peptide spans 1–24 (MSSGGLLLLLGLLTLWAELTPISG). A BPTI/Kunitz inhibitor domain is found at 31-81 (CNLAPESGRCRAHLRRIYYNLESNKCEVFFYGGCGGNDNNFSTWDECRHTC). 3 disulfide bridges follow: Cys31/Cys81, Cys40/Cys64, and Cys56/Cys77.

It belongs to the venom Kunitz-type family. In terms of tissue distribution, expressed by the venom gland.

The protein localises to the secreted. In terms of biological role, serine protease inhibitor that inhibits plasmin (90%) (Ki=0.19 nM), trypsin (70%), FXIa/F11 (37%) (Ki=6 nM) and FXa/F10 (20%), and prolonges the activated partial thromboplastin time. This antifibrinolytic property has been confirmed by a fibrin plate assay. Shows less antifibrinolytic activity that aprotinin. In vivo, reduces the bleeding time in a murine bleeding model, and prevents the increase of fibrin(ogen) degradation products in coagulation-stimulated mice. The protein is Kunitz-type serine protease inhibitor DrKIn-II of Daboia russelii (Russel's viper).